Reading from the N-terminus, the 187-residue chain is MVKYSREPSNLTRSAKAYGAYLRVHFKNTYETATAIKGMLVKDAKRYLNDVIERKRCVPFRKFRGGVGRCAQAKAFKHTQGRWPEKSCKFLLDLLKNLESNAEVKGLEQSKLRLEHVQVNRAPVGRRRSYRAHGRIIPFLSHPCHVELIAVEDEDHVPRHTSTEKRVVKLNKRELARMRLRTGKSLS.

Belongs to the universal ribosomal protein uL22 family.

The polypeptide is Large ribosomal subunit protein uL22 (RPL17) (Theileria parva (East coast fever infection agent)).